The sequence spans 1084 residues: AP-3 complex subunit beta-1 (1084 aa).

The span at 1-11 (MSSNSFAYNEQ) shows a compositional bias: polar residues. Residues 1 to 26 (MSSNSFAYNEQSGGGEATELGQEATS) are disordered. Phosphoserine occurs at positions 276 and 609. Positions 663–800 (AGKAKKENPD…KEKKTKQERN (138 aa)) are disordered. Residues 666–677 (AKKENPDKKFYS) show a composition bias toward basic and acidic residues. Acidic residues predominate over residues 678 to 717 (ESEEEEDSSESSSDSESESGSESGEDEEDDRSGDSAEDSG). Residues 718 to 729 (ESGSEPEAGKGR) show a composition bias toward low complexity. Basic and acidic residues predominate over residues 738 to 753 (GRGDSKDVDKEKENSK). Position 742 is a phosphoserine (serine 742). Low complexity predominate over residues 754-767 (TSESSSGESSSIEE). Over residues 768–781 (SSSDSESESESESE) the composition is skewed to acidic residues. Residues 782–800 (SESRKVTKEKEKKTKQERN) are compositionally biased toward basic and acidic residues.

It belongs to the adaptor complexes large subunit family. As to quaternary structure, adaptor protein complex 3 (AP-3) is a heterotetramer composed of two large adaptins (delta-type subunit AP3D1 and beta-type subunit AP3B1 or AP3B2), a medium adaptin (mu-type subunit AP3M1 or AP3M2) and a small adaptin (sigma-type subunit APS1 or AP3S2). AP-3 associates with the BLOC-1 complex. Interacts with KIF3A; interaction is direct; interaction is impaired by pyrophosphorylation of AP3B1. Phosphorylated on serine residues. Post-translationally, pyrophosphorylation by 5-diphosphoinositol pentakisphosphate (5-IP7) impairs interaction with KIF3A. Serine pyrophosphorylation is achieved by Mg(2+)-dependent, but enzyme independent transfer of a beta-phosphate from a inositol pyrophosphate to a pre-phosphorylated serine residue.

It localises to the cytoplasmic vesicle. It is found in the clathrin-coated vesicle membrane. The protein localises to the golgi apparatus. Subunit of non-clathrin- and clathrin-associated adaptor protein complex 3 (AP-3) that plays a role in protein sorting in the late-Golgi/trans-Golgi network (TGN) and/or endosomes. The AP complexes mediate both the recruitment of clathrin to membranes and the recognition of sorting signals within the cytosolic tails of transmembrane cargo molecules. AP-3 appears to be involved in the sorting of a subset of transmembrane proteins targeted to lysosomes and lysosome-related organelles. In concert with the BLOC-1 complex, AP-3 is required to target cargos into vesicles assembled at cell bodies for delivery into neurites and nerve terminals. The chain is AP-3 complex subunit beta-1 (AP3B1) from Bos taurus (Bovine).